A 347-amino-acid chain; its full sequence is Gibberellin 3-beta-dioxygenase 2 (347 aa).

The region spanning 197–301 (DFQGTQAVIQ…RFSMAYLWGP (105 aa)) is the Fe2OG dioxygenase domain. Fe cation-binding residues include His-225, Asp-227, and His-282. Arg-292 is a catalytic residue. Arg-292 provides a ligand contact to 2-oxoglutarate.

This sequence belongs to the iron/ascorbate-dependent oxidoreductase family. GA3OX subfamily. It depends on L-ascorbate as a cofactor. Fe(2+) is required as a cofactor. In terms of tissue distribution, highly expressed in seedlings but also expressed in roots, leaves, stems, flowers, siliques and seeds. Detected predominantly in the hypocotyl and roots of young seedlings and in the petioles and vasculature of leaves. Not expressed in the shoot apical meristem, but found in the elongation zone, the quiescent center cells and the columella cells of the root tips. Found in the cortex and the endodermis of the embryo axis in germinating seeds.

It carries out the reaction gibberellin A20 + 2-oxoglutarate + O2 = gibberellin A1 + succinate + CO2. It participates in plant hormone biosynthesis; gibberellin biosynthesis. In terms of biological role, converts the inactive gibberellin (GA) precursors GA9 and GA20 in the bioactives gibberellins GA4 and GA1. Involved in the production of bioactive GA for vegetative growth and development. The chain is Gibberellin 3-beta-dioxygenase 2 from Arabidopsis thaliana (Mouse-ear cress).